The primary structure comprises 434 residues: CCA tRNA nucleotidyltransferase 1, mitochondrial (434 aa).

A mitochondrion-targeting transit peptide spans 1-41 (MLRCLYHWHRPVLNRRWSRLCLPKQYLFTMKLQSPEFQSLF). G64 and R67 together coordinate ATP. Residues G64 and R67 each contribute to the CTP site. Mg(2+)-binding residues include D77 and D79. 5 residues coordinate ATP: R151, D194, R197, R200, and R203. The CTP site is built by R151, D194, R197, R200, and R203. Position 400 is a phosphoserine (S400). N6-acetyllysine is present on K402.

The protein belongs to the tRNA nucleotidyltransferase/poly(A) polymerase family. In terms of assembly, monomer, and homodimer; disulfide-linked. It depends on Mg(2+) as a cofactor.

The protein localises to the mitochondrion. The protein resides in the cytoplasm. It is found in the nucleus. It carries out the reaction a tRNA precursor + 2 CTP + ATP = a tRNA with a 3' CCA end + 3 diphosphate. The enzyme catalyses a tRNA with a 3' CCA end + 2 CTP + ATP = a tRNA with a 3' CCACCA end + 3 diphosphate. Functionally, nucleotidyltransferase that catalyzes the addition and repair of the essential 3'-terminal CCA sequence in tRNAs, which is necessary for the attachment of amino acids to the 3' terminus of tRNA molecules, using CTP and ATP as substrates. tRNA 3'-terminal CCA addition is required both for tRNA processing and repair. Promotes tRNA repair and recycling downstream of the ribosome-associated quality control (RQC) pathway by mediating addition of the tRNA 3'-terminal CCA following cleavage by ANKZF1 and repair by ELAC1. Also involved in tRNA surveillance by mediating tandem CCA addition to generate a CCACCA at the 3' terminus of unstable tRNAs and tRNA-like transcripts. While stable tRNAs receive only 3'-terminal CCA, unstable tRNAs beginning with GG are marked with CCACCA and rapidly degraded. The structural flexibility of RNA controls the choice between CCA versus CCACCA addition: following the first CCA addition cycle, nucleotide-binding to the active site triggers a clockwise screw motion, producing torque on the RNA. This ejects stable RNAs, whereas unstable RNAs are refolded while bound to the enzyme and subjected to a second CCA catalytic cycle. Its function is as follows. Adds 2 C residues (CC-) to the 3' terminus of tRNA molecules instead of a complete CCA end as isoform 1 does (in vitro). The polypeptide is CCA tRNA nucleotidyltransferase 1, mitochondrial (Homo sapiens (Human)).